We begin with the raw amino-acid sequence, 150 residues long: Cytochrome c-type biogenesis protein CcmE (150 aa).

Residues 1 to 7 (MTRKQKR) lie on the Cytoplasmic side of the membrane. The helical; Signal-anchor for type II membrane protein transmembrane segment at 8 to 28 (LAIIGGGVAFLTAAVLLVMFA) threads the bilayer. At 29–150 (FSQAVAYFYV…VTLGGEENIR (122 aa)) the chain is on the periplasmic side. Residues His-123 and Tyr-127 each coordinate heme.

Belongs to the CcmE/CycJ family.

The protein resides in the cell inner membrane. In terms of biological role, heme chaperone required for the biogenesis of c-type cytochromes. Transiently binds heme delivered by CcmC and transfers the heme to apo-cytochromes in a process facilitated by CcmF and CcmH. The protein is Cytochrome c-type biogenesis protein CcmE of Rhizobium meliloti (strain 1021) (Ensifer meliloti).